We begin with the raw amino-acid sequence, 69 residues long: MSKQCDVCGKKAQVGHHVSHSNIKTKRRFEPNLQSVRHQYPNGEVKTLSVCTRCLRSGAVVKPAVRKVA.

This sequence belongs to the bacterial ribosomal protein bL28 family.

This chain is Large ribosomal subunit protein bL28, found in Nitratidesulfovibrio vulgaris (strain DSM 19637 / Miyazaki F) (Desulfovibrio vulgaris).